Here is a 148-residue protein sequence, read N- to C-terminus: Dermatopontin (148 aa).

C14 and C40 form a disulfide bridge. A glycan (N-linked (GlcNAc...) asparagine) is linked at N44. 2 disulfides stabilise this stretch: C66–C93 and C103–C147.

This sequence belongs to the dermatopontin family. In terms of processing, the terminal mannose residues of the polysaccharide are 3-O-methylated. No tyrosine sulfation was detected.

The protein resides in the secreted. It is found in the extracellular space. The protein localises to the extracellular matrix. In terms of biological role, seems to mediate adhesion by cell surface integrin binding. This chain is Dermatopontin, found in Biomphalaria glabrata (Bloodfluke planorb).